A 286-amino-acid chain; its full sequence is ATP synthase gamma chain (286 aa).

The protein belongs to the ATPase gamma chain family. In terms of assembly, F-type ATPases have 2 components, CF(1) - the catalytic core - and CF(0) - the membrane proton channel. CF(1) has five subunits: alpha(3), beta(3), gamma(1), delta(1), epsilon(1). CF(0) has three main subunits: a, b and c.

The protein resides in the cell inner membrane. Functionally, produces ATP from ADP in the presence of a proton gradient across the membrane. The gamma chain is believed to be important in regulating ATPase activity and the flow of protons through the CF(0) complex. This Dechloromonas aromatica (strain RCB) protein is ATP synthase gamma chain.